Consider the following 81-residue polypeptide: ATP synthase subunit c, chloroplastic (81 aa).

Transmembrane regions (helical) follow at residues 3-23 and 57-77; these read PLIS…ASIG and LAFM…LLFA.

It belongs to the ATPase C chain family. F-type ATPases have 2 components, F(1) - the catalytic core - and F(0) - the membrane proton channel. F(1) has five subunits: alpha(3), beta(3), gamma(1), delta(1), epsilon(1). F(0) has four main subunits: a(1), b(1), b'(1) and c(10-14). The alpha and beta chains form an alternating ring which encloses part of the gamma chain. F(1) is attached to F(0) by a central stalk formed by the gamma and epsilon chains, while a peripheral stalk is formed by the delta, b and b' chains.

The protein resides in the plastid. Its subcellular location is the chloroplast thylakoid membrane. F(1)F(0) ATP synthase produces ATP from ADP in the presence of a proton or sodium gradient. F-type ATPases consist of two structural domains, F(1) containing the extramembraneous catalytic core and F(0) containing the membrane proton channel, linked together by a central stalk and a peripheral stalk. During catalysis, ATP synthesis in the catalytic domain of F(1) is coupled via a rotary mechanism of the central stalk subunits to proton translocation. Its function is as follows. Key component of the F(0) channel; it plays a direct role in translocation across the membrane. A homomeric c-ring of between 10-14 subunits forms the central stalk rotor element with the F(1) delta and epsilon subunits. The polypeptide is ATP synthase subunit c, chloroplastic (Pinus koraiensis (Korean pine)).